A 304-amino-acid chain; its full sequence is UDP-3-O-acyl-N-acetylglucosamine deacetylase (304 aa).

Positions 78, 235, and 239 each coordinate Zn(2+). The active-site Proton donor is the His262.

Belongs to the LpxC family. Zn(2+) serves as cofactor.

The enzyme catalyses a UDP-3-O-[(3R)-3-hydroxyacyl]-N-acetyl-alpha-D-glucosamine + H2O = a UDP-3-O-[(3R)-3-hydroxyacyl]-alpha-D-glucosamine + acetate. It participates in glycolipid biosynthesis; lipid IV(A) biosynthesis; lipid IV(A) from (3R)-3-hydroxytetradecanoyl-[acyl-carrier-protein] and UDP-N-acetyl-alpha-D-glucosamine: step 2/6. Catalyzes the hydrolysis of UDP-3-O-myristoyl-N-acetylglucosamine to form UDP-3-O-myristoylglucosamine and acetate, the committed step in lipid A biosynthesis. The protein is UDP-3-O-acyl-N-acetylglucosamine deacetylase of Anaeromyxobacter sp. (strain Fw109-5).